Consider the following 250-residue polypeptide: Ubiquinone/menaquinone biosynthesis C-methyltransferase UbiE (250 aa).

S-adenosyl-L-methionine-binding positions include Thr73, Asp94, 122 to 123 (NA), and Ser139.

The protein belongs to the class I-like SAM-binding methyltransferase superfamily. MenG/UbiE family.

It carries out the reaction a 2-demethylmenaquinol + S-adenosyl-L-methionine = a menaquinol + S-adenosyl-L-homocysteine + H(+). The enzyme catalyses a 2-methoxy-6-(all-trans-polyprenyl)benzene-1,4-diol + S-adenosyl-L-methionine = a 5-methoxy-2-methyl-3-(all-trans-polyprenyl)benzene-1,4-diol + S-adenosyl-L-homocysteine + H(+). It functions in the pathway quinol/quinone metabolism; menaquinone biosynthesis; menaquinol from 1,4-dihydroxy-2-naphthoate: step 2/2. Its pathway is cofactor biosynthesis; ubiquinone biosynthesis. Its function is as follows. Methyltransferase required for the conversion of demethylmenaquinol (DMKH2) to menaquinol (MKH2) and the conversion of 2-polyprenyl-6-methoxy-1,4-benzoquinol (DDMQH2) to 2-polyprenyl-3-methyl-6-methoxy-1,4-benzoquinol (DMQH2). The polypeptide is Ubiquinone/menaquinone biosynthesis C-methyltransferase UbiE (Francisella tularensis subsp. mediasiatica (strain FSC147)).